The following is a 183-amino-acid chain: uncharacterized protein (183 aa).

The interval 136-183 (EPPASVPSKQSGRSDKKKSTRKSPTFRNRPDFRKNKGRQLNKTTKQKK) is disordered. Residues 170-183 (NKGRQLNKTTKQKK) show a composition bias toward basic residues.

This is an uncharacterized protein from Homo sapiens (Human).